We begin with the raw amino-acid sequence, 297 residues long: Phosphoribosylaminoimidazole-succinocarboxamide synthase (297 aa).

This sequence belongs to the SAICAR synthetase family.

It catalyses the reaction 5-amino-1-(5-phospho-D-ribosyl)imidazole-4-carboxylate + L-aspartate + ATP = (2S)-2-[5-amino-1-(5-phospho-beta-D-ribosyl)imidazole-4-carboxamido]succinate + ADP + phosphate + 2 H(+). Its pathway is purine metabolism; IMP biosynthesis via de novo pathway; 5-amino-1-(5-phospho-D-ribosyl)imidazole-4-carboxamide from 5-amino-1-(5-phospho-D-ribosyl)imidazole-4-carboxylate: step 1/2. The polypeptide is Phosphoribosylaminoimidazole-succinocarboxamide synthase (Corynebacterium diphtheriae (strain ATCC 700971 / NCTC 13129 / Biotype gravis)).